A 54-amino-acid polypeptide reads, in one-letter code: ATP synthase F(0) complex subunit 8 (54 aa).

Residues 13–35 (ALSLWVCFPLMMLSLSSFLPLTL) traverse the membrane as a helical segment.

Belongs to the ATPase protein 8 family. In terms of assembly, component of the ATP synthase complex composed at least of ATP5F1A/subunit alpha, ATP5F1B/subunit beta, ATP5MC1/subunit c (homooctomer), MT-ATP6/subunit a, MT-ATP8/subunit 8, ATP5ME/subunit e, ATP5MF/subunit f, ATP5MG/subunit g, ATP5MK/subunit k, ATP5MJ/subunit j, ATP5F1C/subunit gamma, ATP5F1D/subunit delta, ATP5F1E/subunit epsilon, ATP5PF/subunit F6, ATP5PB/subunit b, ATP5PD/subunit d, ATP5PO/subunit OSCP. ATP synthase complex consists of a soluble F(1) head domain (subunits alpha(3) and beta(3)) - the catalytic core - and a membrane F(0) domain - the membrane proton channel (subunits c, a, 8, e, f, g, k and j). These two domains are linked by a central stalk (subunits gamma, delta, and epsilon) rotating inside the F1 region and a stationary peripheral stalk (subunits F6, b, d, and OSCP).

The protein localises to the mitochondrion membrane. In terms of biological role, subunit 8, of the mitochondrial membrane ATP synthase complex (F(1)F(0) ATP synthase or Complex V) that produces ATP from ADP in the presence of a proton gradient across the membrane which is generated by electron transport complexes of the respiratory chain. ATP synthase complex consist of a soluble F(1) head domain - the catalytic core - and a membrane F(1) domain - the membrane proton channel. These two domains are linked by a central stalk rotating inside the F(1) region and a stationary peripheral stalk. During catalysis, ATP synthesis in the catalytic domain of F(1) is coupled via a rotary mechanism of the central stalk subunits to proton translocation. In vivo, can only synthesize ATP although its ATP hydrolase activity can be activated artificially in vitro. Part of the complex F(0) domain. In Myxine glutinosa (Atlantic hagfish), this protein is ATP synthase F(0) complex subunit 8.